The chain runs to 511 residues: 2,3-bisphosphoglycerate-independent phosphoglycerate mutase (511 aa).

Residues aspartate 12 and serine 62 each contribute to the Mn(2+) site. Serine 62 (phosphoserine intermediate) is an active-site residue. Substrate-binding positions include histidine 123, 153–154 (RD), arginine 185, arginine 191, 260–263 (RPDR), and lysine 335. Mn(2+) contacts are provided by aspartate 402, histidine 406, aspartate 443, histidine 444, and histidine 462.

The protein belongs to the BPG-independent phosphoglycerate mutase family. Monomer. The cofactor is Mn(2+).

It catalyses the reaction (2R)-2-phosphoglycerate = (2R)-3-phosphoglycerate. Its pathway is carbohydrate degradation; glycolysis; pyruvate from D-glyceraldehyde 3-phosphate: step 3/5. Catalyzes the interconversion of 2-phosphoglycerate and 3-phosphoglycerate. In Acetivibrio thermocellus (strain ATCC 27405 / DSM 1237 / JCM 9322 / NBRC 103400 / NCIMB 10682 / NRRL B-4536 / VPI 7372) (Clostridium thermocellum), this protein is 2,3-bisphosphoglycerate-independent phosphoglycerate mutase.